Consider the following 154-residue polypeptide: Xanthine-guanine phosphoribosyltransferase (154 aa).

5-phospho-alpha-D-ribose 1-diphosphate-binding positions include 37–38 (RG) and 90–98 (DDLVDTGNT). Position 91 (Asp-91) interacts with Mg(2+). Positions 94 and 137 each coordinate guanine. Xanthine-binding residues include Asp-94 and Ile-137. GMP contacts are provided by residues 94–98 (DTGNT) and 136–137 (WI).

This sequence belongs to the purine/pyrimidine phosphoribosyltransferase family. XGPT subfamily. Homotetramer. The cofactor is Mg(2+).

The protein resides in the cell inner membrane. It carries out the reaction GMP + diphosphate = guanine + 5-phospho-alpha-D-ribose 1-diphosphate. The enzyme catalyses XMP + diphosphate = xanthine + 5-phospho-alpha-D-ribose 1-diphosphate. The catalysed reaction is IMP + diphosphate = hypoxanthine + 5-phospho-alpha-D-ribose 1-diphosphate. The protein operates within purine metabolism; GMP biosynthesis via salvage pathway; GMP from guanine: step 1/1. It functions in the pathway purine metabolism; XMP biosynthesis via salvage pathway; XMP from xanthine: step 1/1. In terms of biological role, purine salvage pathway enzyme that catalyzes the transfer of the ribosyl-5-phosphate group from 5-phospho-alpha-D-ribose 1-diphosphate (PRPP) to the N9 position of the 6-oxopurines guanine and xanthine to form the corresponding ribonucleotides GMP (guanosine 5'-monophosphate) and XMP (xanthosine 5'-monophosphate), with the release of PPi. To a lesser extent, also acts on hypoxanthine. This is Xanthine-guanine phosphoribosyltransferase from Histophilus somni (strain 129Pt) (Haemophilus somnus).